The chain runs to 394 residues: Elongation factor Tu (394 aa).

A tr-type G domain is found at 10–204; the sequence is KPHVNIGTIG…AVDSYIPQPV (195 aa). Residues 19–26 are G1; the sequence is GHVDHGKT. Residue 19 to 26 participates in GTP binding; sequence GHVDHGKT. Thr26 contacts Mg(2+). The segment at 60–64 is G2; that stretch reads GITIS. A G3 region spans residues 81–84; the sequence is DCPG. GTP-binding positions include 81–85 and 136–139; these read DCPGH and NKID. The tract at residues 136–139 is G4; it reads NKID. The segment at 174–176 is G5; sequence SAL.

The protein belongs to the TRAFAC class translation factor GTPase superfamily. Classic translation factor GTPase family. EF-Tu/EF-1A subfamily. In terms of assembly, monomer.

Its subcellular location is the cytoplasm. The enzyme catalyses GTP + H2O = GDP + phosphate + H(+). Functionally, GTP hydrolase that promotes the GTP-dependent binding of aminoacyl-tRNA to the A-site of ribosomes during protein biosynthesis. This is Elongation factor Tu from Rickettsia peacockii (strain Rustic).